Reading from the N-terminus, the 355-residue chain is Serine endoprotease DegS (355 aa).

Topologically, residues 1 to 4 are cytoplasmic; that stretch reads MFVK. A helical transmembrane segment spans residues 5 to 27; that stretch reads LLRSVAIGLIVGAILLVAMPSLR. The Periplasmic segment spans residues 28–355; that stretch reads SLNPLSTPQF…VTIQEYPATN (328 aa). Residues H96 and D126 each act as charge relay system in the active site. Substrate is bound at residue T184. Residue S201 is the Charge relay system of the active site. Substrate is bound at residue 259 to 264; sequence IGIGGR. Positions 281-326 constitute a PDZ domain; the sequence is GIVVNEVSPDGPAANAGIQVNDLIISVDNKPAISALETMDQVAEIR. Y351 provides a ligand contact to substrate.

The protein belongs to the peptidase S1C family. As to quaternary structure, homotrimer.

The protein resides in the cell inner membrane. It carries out the reaction Acts on substrates that are at least partially unfolded. The cleavage site P1 residue is normally between a pair of hydrophobic residues, such as Val-|-Val.. Its activity is regulated as follows. Allosterically activated by the C-terminus of exposed OMP peptides (consensus Tyr-X-Phe-COOH); cleavage only occurs in the presence of peptides. Inhibited when RseB is bound to RseA. A site-1 protease (S1P) that cleaves the peptide bond between 'Val-148' and 'Ser-149' in RseA. Part of a regulated intramembrane proteolysis (RIP) cascade. When heat shock or other environmental stresses disrupt protein folding in the periplasm, DegS senses the accumulation of unassembled outer membrane porins (OMP) and then initiates RseA (anti sigma-E factor) degradation by cleaving its periplasmic domain, making it a substrate for subsequent cleavage by RseP. This cascade ultimately leads to the sigma-E-driven expression of a variety of factors dealing with folding stress in the periplasm and OMP assembly. Required for basal and stress-induced degradation of RseA. The sequence is that of Serine endoprotease DegS (degS) from Escherichia coli O157:H7.